Here is a 326-residue protein sequence, read N- to C-terminus: N-acetyl-gamma-glutamyl-phosphate reductase (326 aa).

C155 is a catalytic residue.

This sequence belongs to the NAGSA dehydrogenase family. Type 1 subfamily.

The protein localises to the cytoplasm. The enzyme catalyses N-acetyl-L-glutamate 5-semialdehyde + phosphate + NADP(+) = N-acetyl-L-glutamyl 5-phosphate + NADPH + H(+). It functions in the pathway amino-acid biosynthesis; L-arginine biosynthesis; N(2)-acetyl-L-ornithine from L-glutamate: step 3/4. Catalyzes the NADPH-dependent reduction of N-acetyl-5-glutamyl phosphate to yield N-acetyl-L-glutamate 5-semialdehyde. This Shewanella sp. (strain MR-4) protein is N-acetyl-gamma-glutamyl-phosphate reductase.